The primary structure comprises 345 residues: Holliday junction branch migration complex subunit RuvB (345 aa).

The tract at residues 4-182 (PDRIVSAVQR…FGIPIRLEFY (179 aa)) is large ATPase domain (RuvB-L). Residues Arg22, Gly63, Lys66, Thr67, Thr68, 129-131 (EDY), Arg172, Tyr182, and Arg219 contribute to the ATP site. Thr67 is a Mg(2+) binding site. The interval 183-253 (TVDELQAIVT…IADAALSRLE (71 aa)) is small ATPAse domain (RuvB-S). The head domain (RuvB-H) stretch occupies residues 256 to 345 (ALGLDQLDRR…QSQINLFEEE (90 aa)). 3 residues coordinate DNA: Arg292, Arg311, and Arg316.

The protein belongs to the RuvB family. As to quaternary structure, homohexamer. Forms an RuvA(8)-RuvB(12)-Holliday junction (HJ) complex. HJ DNA is sandwiched between 2 RuvA tetramers; dsDNA enters through RuvA and exits via RuvB. An RuvB hexamer assembles on each DNA strand where it exits the tetramer. Each RuvB hexamer is contacted by two RuvA subunits (via domain III) on 2 adjacent RuvB subunits; this complex drives branch migration. In the full resolvosome a probable DNA-RuvA(4)-RuvB(12)-RuvC(2) complex forms which resolves the HJ.

The protein resides in the cytoplasm. It carries out the reaction ATP + H2O = ADP + phosphate + H(+). Its function is as follows. The RuvA-RuvB-RuvC complex processes Holliday junction (HJ) DNA during genetic recombination and DNA repair, while the RuvA-RuvB complex plays an important role in the rescue of blocked DNA replication forks via replication fork reversal (RFR). RuvA specifically binds to HJ cruciform DNA, conferring on it an open structure. The RuvB hexamer acts as an ATP-dependent pump, pulling dsDNA into and through the RuvAB complex. RuvB forms 2 homohexamers on either side of HJ DNA bound by 1 or 2 RuvA tetramers; 4 subunits per hexamer contact DNA at a time. Coordinated motions by a converter formed by DNA-disengaged RuvB subunits stimulates ATP hydrolysis and nucleotide exchange. Immobilization of the converter enables RuvB to convert the ATP-contained energy into a lever motion, pulling 2 nucleotides of DNA out of the RuvA tetramer per ATP hydrolyzed, thus driving DNA branch migration. The RuvB motors rotate together with the DNA substrate, which together with the progressing nucleotide cycle form the mechanistic basis for DNA recombination by continuous HJ branch migration. Branch migration allows RuvC to scan DNA until it finds its consensus sequence, where it cleaves and resolves cruciform DNA. This chain is Holliday junction branch migration complex subunit RuvB, found in Chelativorans sp. (strain BNC1).